Here is a 641-residue protein sequence, read N- to C-terminus: Tetracycline resistance protein TetS (641 aa).

In terms of domain architecture, tr-type G spans 1-242 (MKIINIGILA…VITSKLFSPT (242 aa)). Residues 10–17 (AHVDAGKT), 74–78 (DTPGH), and 128–131 (NKID) contribute to the GTP site.

The protein belongs to the TRAFAC class translation factor GTPase superfamily. Classic translation factor GTPase family. TetM/TetO subfamily.

In terms of biological role, abolishes the inhibitory effect of tetracyclin on protein synthesis by a non-covalent modification of the ribosomes. The sequence is that of Tetracycline resistance protein TetS (tetS) from Listeria monocytogenes.